Reading from the N-terminus, the 313-residue chain is Phenylalanine-4-hydroxylase (313 aa).

H154, H159, and E200 together coordinate Fe cation.

This sequence belongs to the biopterin-dependent aromatic amino acid hydroxylase family. Requires Fe(2+) as cofactor.

It catalyses the reaction (6R)-L-erythro-5,6,7,8-tetrahydrobiopterin + L-phenylalanine + O2 = (4aS,6R)-4a-hydroxy-L-erythro-5,6,7,8-tetrahydrobiopterin + L-tyrosine. It functions in the pathway amino-acid degradation; L-phenylalanine degradation; acetoacetate and fumarate from L-phenylalanine: step 1/6. This Ralstonia nicotianae (strain ATCC BAA-1114 / GMI1000) (Ralstonia solanacearum) protein is Phenylalanine-4-hydroxylase (phhA).